The sequence spans 439 residues: Glucose-1-phosphate adenylyltransferase (439 aa).

Residues Y122, G187, 202 to 203 (EK), and S220 contribute to the alpha-D-glucose 1-phosphate site.

Belongs to the bacterial/plant glucose-1-phosphate adenylyltransferase family. As to quaternary structure, homotetramer.

It carries out the reaction alpha-D-glucose 1-phosphate + ATP + H(+) = ADP-alpha-D-glucose + diphosphate. Its pathway is glycan biosynthesis; glycogen biosynthesis. Its function is as follows. Involved in the biosynthesis of ADP-glucose, a building block required for the elongation reactions to produce glycogen. Catalyzes the reaction between ATP and alpha-D-glucose 1-phosphate (G1P) to produce pyrophosphate and ADP-Glc. This chain is Glucose-1-phosphate adenylyltransferase, found in Thiobacillus denitrificans (strain ATCC 25259 / T1).